The sequence spans 940 residues: SWI/SNF-related matrix-associated actin-dependent regulator of chromatin subfamily A-like protein 1 (940 aa).

The tract at residues 1–155 (MSISPLKCPC…GQGHPQASLE (155 aa)) is disordered. S2 bears the N-acetylserine mark. Mediates interaction with RPA2 stretches follow at residues 2 to 36 (SISP…KLLA) and 11 to 36 (LLQR…KLLA). A compositionally biased stretch (basic and acidic residues) spans 17 to 40 (GKIEANRQKALARRAEKLLAEQHQ). Residues 18-40 (KIEANRQKALARRAEKLLAEQHQ) adopt a coiled-coil conformation. Composition is skewed to polar residues over residues 41–53 (KPAQ…SQNL) and 68–95 (KQQN…TSEQ). S125, S131, S153, and S200 each carry phosphoserine. HARP domains lie at 229-299 (VVGS…QPLE) and 325-396 (SLAF…DPLP). The region spanning 442–597 (NFAIAQRGRL…YTQILAVRPT (156 aa)) is the Helicase ATP-binding domain. 455–462 (DDMGLGKT) serves as a coordination point for ATP. Positions 546–549 (DESH) match the DESH box motif. The Nuclear localization signal motif lies at 641–658 (RRLKGDVLSQLPAKQARW). The disordered stretch occupies residues 662–682 (PQARSTPGPEPPWMPPPRMTT). Residues 669-679 (GPEPPWMPPPR) are compositionally biased toward pro residues. The 157-residue stretch at 708–864 (SIIEYILDLL…ETNFSEMTEA (157 aa)) folds into the Helicase C-terminal domain. Residues 899 to 918 (ESFDPGSQDTGDKLDESTLT) form a disordered region.

This sequence belongs to the SNF2/RAD54 helicase family. SMARCAL1 subfamily. Interacts with RPA2; the interaction is direct and mediates the recruitment by the RPA complex of SMARCAL1 to sites of DNA damage. DNA damage-regulated phosphorylation by kinases that may include ATM, ATR and PRKDC. Expressed in mature oocytes, 2-4 cell stage embryos and 8-16 cell stage embryos. Expressed at lower levels in morulae and blastocysts.

The protein localises to the nucleus. The catalysed reaction is ATP + H2O = ADP + phosphate + H(+). In terms of biological role, ATP-dependent annealing helicase that binds selectively to fork DNA relative to ssDNA or dsDNA and catalyzes the rewinding of the stably unwound DNA. Rewinds single-stranded DNA bubbles that are stably bound by replication protein A (RPA). Acts throughout the genome to reanneal stably unwound DNA, performing the opposite reaction of many enzymes, such as helicases and polymerases, that unwind DNA. May play an important role in DNA damage response by acting at stalled replication forks. This is SWI/SNF-related matrix-associated actin-dependent regulator of chromatin subfamily A-like protein 1 (SMARCAL1) from Bos taurus (Bovine).